Here is a 1183-residue protein sequence, read N- to C-terminus: Chromosome partition protein Smc (1183 aa).

Residue 32-39 coordinates ATP; it reads PNGSGKSN. A coiled-coil region spans residues 162–483; it reads EEAAGIKKLQ…KLSQDIREFE (322 aa). One can recognise an SMC hinge domain in the interval 519–632; the sequence is SGIDGVLISL…VENIDIATDI (114 aa). Residues 666 to 1019 are a coiled coil; that stretch reads INQIFERKKE…VMDLIQEIDE (354 aa).

The protein belongs to the SMC family. In terms of assembly, homodimer.

It is found in the cytoplasm. Its function is as follows. Required for chromosome condensation and partitioning. The chain is Chromosome partition protein Smc from Fusobacterium nucleatum subsp. nucleatum (strain ATCC 25586 / DSM 15643 / BCRC 10681 / CIP 101130 / JCM 8532 / KCTC 2640 / LMG 13131 / VPI 4355).